A 245-amino-acid chain; its full sequence is MIIPALDLIDGNVVRLHQGDYGQQRDYGSDALPRLQDYQDQGAEVLHLVDLTGAKNPAARQTPLLSRLLAGVNVPVQVGGGIRHQDDVDALLQAGATRVVVGSTAVKQPEDVQQWFRQYGADAIVLALDVRIDADNRKEVAIGGWQEAAGMTLEQAIEQFLPYGLKHVLCTDISRDGTLAGSNVDLYREVSARYPQIAFQSSGGIGSLQDIRALRGSGAQGVIVGRALLENKFTVSEAISCWQNG.

Catalysis depends on aspartate 7, which acts as the Proton acceptor. The Proton donor role is filled by aspartate 129.

Belongs to the HisA/HisF family.

It localises to the cytoplasm. The enzyme catalyses 1-(5-phospho-beta-D-ribosyl)-5-[(5-phospho-beta-D-ribosylamino)methylideneamino]imidazole-4-carboxamide = 5-[(5-phospho-1-deoxy-D-ribulos-1-ylimino)methylamino]-1-(5-phospho-beta-D-ribosyl)imidazole-4-carboxamide. It participates in amino-acid biosynthesis; L-histidine biosynthesis; L-histidine from 5-phospho-alpha-D-ribose 1-diphosphate: step 4/9. In Erwinia tasmaniensis (strain DSM 17950 / CFBP 7177 / CIP 109463 / NCPPB 4357 / Et1/99), this protein is 1-(5-phosphoribosyl)-5-[(5-phosphoribosylamino)methylideneamino] imidazole-4-carboxamide isomerase.